Here is a 180-residue protein sequence, read N- to C-terminus: ATP-dependent protease subunit HslV (180 aa).

Thr-5 is an active-site residue. Residues Gly-165, Cys-168, and Thr-171 each coordinate Na(+).

This sequence belongs to the peptidase T1B family. HslV subfamily. As to quaternary structure, a double ring-shaped homohexamer of HslV is capped on each side by a ring-shaped HslU homohexamer. The assembly of the HslU/HslV complex is dependent on binding of ATP.

It localises to the cytoplasm. The catalysed reaction is ATP-dependent cleavage of peptide bonds with broad specificity.. Allosterically activated by HslU binding. In terms of biological role, protease subunit of a proteasome-like degradation complex believed to be a general protein degrading machinery. The sequence is that of ATP-dependent protease subunit HslV from Helicobacter pylori (strain ATCC 700392 / 26695) (Campylobacter pylori).